Reading from the N-terminus, the 303-residue chain is Peroxisomal trans-2-enoyl-CoA reductase (303 aa).

NADP(+) is bound at residue 23–47 (VTGGATGIGKAIVKELLELGSNVVI). Residue Lys-32 is modified to N6-succinyllysine. Ser-49 bears the Phosphoserine mark. Residue Tyr-179 is the Proton acceptor of the active site. Tyr-179 is subject to Phosphotyrosine. The Microbody targeting signal signature appears at 301–303 (AKL).

The protein belongs to the short-chain dehydrogenases/reductases (SDR) family. As to quaternary structure, interacts with PEX5, probably required to target it into peroxisomes.

The protein localises to the peroxisome. It carries out the reaction a (2E)-enoyl-CoA + NADPH + H(+) = a 2,3-saturated acyl-CoA + NADP(+). The catalysed reaction is (2E)-decenoyl-CoA + NADPH + H(+) = decanoyl-CoA + NADP(+). It catalyses the reaction (2E)-hexenoyl-CoA + NADPH + H(+) = hexanoyl-CoA + NADP(+). The enzyme catalyses (2E)-octenoyl-CoA + NADPH + H(+) = octanoyl-CoA + NADP(+). It carries out the reaction (2E)-dodecenoyl-CoA + NADPH + H(+) = dodecanoyl-CoA + NADP(+). The catalysed reaction is (2E)-tetradecenoyl-CoA + NADPH + H(+) = tetradecanoyl-CoA + NADP(+). It participates in lipid metabolism; fatty acid biosynthesis. In terms of biological role, participates in chain elongation of fatty acids. Catalyzes the reduction of trans-2-enoyl-CoAs of varying chain lengths from 6:1 to 16:1, having maximum activity with 10:1 CoA. Has no 2,4-dienoyl-CoA reductase activity. This chain is Peroxisomal trans-2-enoyl-CoA reductase, found in Homo sapiens (Human).